A 217-amino-acid polypeptide reads, in one-letter code: E3 ubiquitin-protein ligase znrf2 (217 aa).

Disordered stretches follow at residues 1–27 (MGAKQSSPAANGRTRAYSGSDLPSATA) and 63–111 (QFIS…ERST). A lipid anchor (N-myristoyl glycine) is attached at G2. Positions 68 to 100 (RTRSVGPSARPQSGINIPNSGAYSSADSGNSTP) are enriched in polar residues. The segment at 174 to 215 (CAICLEELLQGDTIARLPCLCIYHKGCIDEWFEVNRSCPEHP) adopts an RING-type; atypical zinc-finger fold.

The protein resides in the endosome membrane. Its subcellular location is the lysosome membrane. It is found in the presynaptic cell membrane. The catalysed reaction is S-ubiquitinyl-[E2 ubiquitin-conjugating enzyme]-L-cysteine + [acceptor protein]-L-lysine = [E2 ubiquitin-conjugating enzyme]-L-cysteine + N(6)-ubiquitinyl-[acceptor protein]-L-lysine.. It participates in protein modification; protein ubiquitination. May play a role in the establishment and maintenance of neuronal transmission and plasticity via its ubiquitin ligase activity. E3 ubiquitin ligases accept ubiquitin from an E2 ubiquitin-conjugating enzyme in the form of a thioester and then directly transfer the ubiquitin to targeted substrates. The chain is E3 ubiquitin-protein ligase znrf2 (znrf2) from Danio rerio (Zebrafish).